Here is a 450-residue protein sequence, read N- to C-terminus: 3-phosphoshikimate 1-carboxyvinyltransferase (450 aa).

3-phosphoshikimate is bound by residues lysine 28, serine 29, and arginine 33. Residue lysine 28 coordinates phosphoenolpyruvate. Phosphoenolpyruvate is bound by residues glycine 100 and arginine 128. 3-phosphoshikimate contacts are provided by serine 173, glutamine 175, aspartate 326, and lysine 353. Glutamine 175 is a phosphoenolpyruvate binding site. Aspartate 326 (proton acceptor) is an active-site residue. 2 residues coordinate phosphoenolpyruvate: arginine 357 and arginine 402.

It belongs to the EPSP synthase family. In terms of assembly, monomer.

It localises to the cytoplasm. The catalysed reaction is 3-phosphoshikimate + phosphoenolpyruvate = 5-O-(1-carboxyvinyl)-3-phosphoshikimate + phosphate. It functions in the pathway metabolic intermediate biosynthesis; chorismate biosynthesis; chorismate from D-erythrose 4-phosphate and phosphoenolpyruvate: step 6/7. Its function is as follows. Catalyzes the transfer of the enolpyruvyl moiety of phosphoenolpyruvate (PEP) to the 5-hydroxyl of shikimate-3-phosphate (S3P) to produce enolpyruvyl shikimate-3-phosphate and inorganic phosphate. The protein is 3-phosphoshikimate 1-carboxyvinyltransferase of Brucella melitensis biotype 1 (strain ATCC 23456 / CCUG 17765 / NCTC 10094 / 16M).